Here is a 376-residue protein sequence, read N- to C-terminus: Arginine/serine-rich coiled-coil protein 2 (376 aa).

A disordered region spans residues 1–171 (MIRTNFLLKQ…PSPPPFRGRN (171 aa)). Positions 13–52 (RHESKDKSSKRHKSEEHNDKEHSSDKGRERLNSSENGEDR) are enriched in basic and acidic residues. Phosphoserine is present on Ser45. Over residues 53–155 (HKRKERKSSR…KRIEKPRRFS (103 aa)) the composition is skewed to basic residues. Residues 171–214 (NTAMDAQEALARRLERAKKLQEQREKEMVEKQKQQEMAAAAAAT) adopt a coiled-coil conformation. A Glycyl lysine isopeptide (Lys-Gly) (interchain with G-Cter in SUMO1); alternate cross-link involves residue Lys317. Lys317 participates in a covalent cross-link: Glycyl lysine isopeptide (Lys-Gly) (interchain with G-Cter in SUMO2); alternate. Ser318 is subject to Phosphoserine.

It belongs to the RSRC2 family.

The protein is Arginine/serine-rich coiled-coil protein 2 (Rsrc2) of Rattus norvegicus (Rat).